The primary structure comprises 337 residues: Monoacylglycerol lipase abhd6-A (337 aa).

Residues 1–19 (MDLDVLNMFLVAGGTLLVP) lie on the Extracellular side of the membrane. The chain crosses the membrane as a helical; Signal-anchor for type II membrane protein span at residues 20–42 (ILAFVTSFLLWPAALIKIYYWYW). Topologically, residues 43-337 (RRALGMQVKF…QSTENNKKHE (295 aa)) are cytoplasmic. One can recognise an AB hydrolase-1 domain in the interval 73-313 (SVLMLHGFSA…CGHSVVMERP (241 aa)). Catalysis depends on S148, which acts as the Nucleophile. Residues D278 and H306 each act as charge relay system in the active site.

It belongs to the AB hydrolase superfamily.

The protein resides in the late endosome membrane. It localises to the lysosome membrane. Its subcellular location is the mitochondrion membrane. The catalysed reaction is Hydrolyzes glycerol monoesters of long-chain fatty acids.. It carries out the reaction 1-octanoylglycerol + H2O = octanoate + glycerol + H(+). The enzyme catalyses 1-decanoylglycerol + H2O = decanoate + glycerol + H(+). It catalyses the reaction 1-dodecanoylglycerol + H2O = dodecanoate + glycerol + H(+). The catalysed reaction is 1-tetradecanoylglycerol + H2O = tetradecanoate + glycerol + H(+). It carries out the reaction 2-hexadecanoylglycerol + H2O = glycerol + hexadecanoate + H(+). The enzyme catalyses 2-(9Z-octadecenoyl)-glycerol + H2O = glycerol + (9Z)-octadecenoate + H(+). It catalyses the reaction 1-(9Z-octadecenoyl)-glycerol + H2O = glycerol + (9Z)-octadecenoate + H(+). The catalysed reaction is 2-(9Z,12Z-octadecadienoyl)-glycerol + H2O = (9Z,12Z)-octadecadienoate + glycerol + H(+). It carries out the reaction 2-(5Z,8Z,11Z,14Z-eicosatetraenoyl)-glycerol + H2O = glycerol + (5Z,8Z,11Z,14Z)-eicosatetraenoate + H(+). The enzyme catalyses 1-(5Z,8Z,11Z,14Z-eicosatetraenoyl)-glycerol + H2O = glycerol + (5Z,8Z,11Z,14Z)-eicosatetraenoate + H(+). It catalyses the reaction 1-(9Z,12Z-octadecadienoyl)-glycerol + H2O = (9Z,12Z)-octadecadienoate + glycerol + H(+). The catalysed reaction is 3-(9Z-octadecenoyl)-sn-glycero-1-phospho-(3'-(9Z-octadecenoyl)-1'-sn-glycerol) + H2O = 3-(9Z-octadecenoyl)-sn-glycero-1-phospho-(1'-sn-glycerol) + (9Z)-octadecenoate + H(+). It carries out the reaction (S,S)-2-(9Z-octadecenoyl)-sn-glycero-1-phospho-(2'-(9Z-octadecenoyl)-1'-sn-glycerol) + H2O = (S,S)-2-(9Z-octadecenoyl)-sn-glycero-1-phospho-(1'-sn-glycerol) + (9Z)-octadecenoate + H(+). The enzyme catalyses (R,R)-2-(9Z-octadecenoyl)-sn-glycero-3-phospho-(2'-(9Z-octadecenoyl)-3'-sn-glycerol) + H2O = (R,R)-2-(9Z-octadecenoyl)-sn-glycero-3-phospho-(3'-sn-glycerol) + (9Z)-octadecenoate + H(+). Lipase that preferentially hydrolysis medium-chain saturated monoacylglycerols including 2-arachidonoylglycerol. Through 2-arachidonoylglycerol degradation may regulate endocannabinoid signaling pathways. Also has a lysophosphatidyl lipase activity with a preference for lysophosphatidylglycerol among other lysophospholipids. Also able to degrade bis(monoacylglycero)phosphate (BMP) and constitutes the major enzyme for BMP catabolism. BMP, also known as lysobisphosphatidic acid, is enriched in late endosomes and lysosomes and plays a key role in the formation of intraluminal vesicles and in lipid sorting. In Xenopus laevis (African clawed frog), this protein is Monoacylglycerol lipase abhd6-A (abhd6-a).